Reading from the N-terminus, the 870-residue chain is S-linalool synthase (870 aa).

The Mg(2+) site is built by aspartate 547, aspartate 551, asparagine 689, serine 693, and glutamate 697. A DDXXD motif motif is present at residues 547–551 (DDFFD).

It belongs to the terpene synthase family. Mg(2+) is required as a cofactor. Mn(2+) serves as cofactor. Highly expressed in cells of the transmitting tract of the stigma and style and in the epidermal cells of petals, as well as in stamens.

The catalysed reaction is (2E)-geranyl diphosphate + H2O = (S)-linalool + diphosphate. In terms of biological role, involved in the biosynthesis of the acyclic monoterpene S-linalool, a major component of the strong sweet scent of the C.breweri flowers. The chain is S-linalool synthase (LIS) from Clarkia breweri (Fairy fans).